The chain runs to 1216 residues: Regulator of telomere elongation helicase 1 (1216 aa).

In terms of domain architecture, Helicase ATP-binding spans 7 to 295; sequence KGVTVDFPFQ…TKVAQQAELH (289 aa). 42-49 lines the ATP pocket; the sequence is SPTGTGKT. [4Fe-4S] cluster is bound by residues Cys-144, Cys-162, Cys-171, and Cys-206. The Nuclear localization signal motif lies at 150-166; it reads KKQESNHMQVHLCRRKV. Residues 249 to 252 carry the DEAH box motif; the sequence is DEAH. Positions 874 to 880 match the Nuclear localization signal motif; it reads QRGRRRK. 2 disordered regions span residues 978 to 1018 and 1140 to 1172; these read GCSS…ATRQ and GPGT…RKTQ. The short motif at 1172 to 1179 is the PIP-box element; sequence QSKISSFL.

It belongs to the helicase family. RAD3/XPD subfamily. In terms of assembly, interacts with TERF1. Interacts (via PIP-box) with PCNA; the interaction is direct and essential for suppressing telomere fragility. Interacts with MMS19; the interaction mediates the association of RTEL1 with the cytosolic iron-sulfur protein assembly (CIA) complex. In terms of tissue distribution, highly expressed in adult testis, liver and ovary.

It localises to the nucleus. The catalysed reaction is ATP + H2O = ADP + phosphate + H(+). In terms of biological role, a probable ATP-dependent DNA helicase implicated in telomere-length regulation, DNA repair and the maintenance of genomic stability. Acts as an anti-recombinase to counteract toxic recombination and limit crossover during meiosis. Regulates meiotic recombination and crossover homeostasis by physically dissociating strand invasion events and thereby promotes noncrossover repair by meiotic synthesis dependent strand annealing (SDSA) as well as disassembly of D loop recombination intermediates. Also disassembles T loops and prevents telomere fragility by counteracting telomeric G4-DNA structures, which together ensure the dynamics and stability of the telomere. The sequence is that of Regulator of telomere elongation helicase 1 from Bos taurus (Bovine).